The sequence spans 238 residues: Capsular polysaccharide phosphotransferase eps5J (238 aa).

This sequence belongs to the stealth family.

The protein is Capsular polysaccharide phosphotransferase eps5J (eps5J) of Streptococcus thermophilus.